Consider the following 466-residue polypeptide: Glutamate--tRNA ligase 2 (466 aa).

Positions 11–21 match the 'HIGH' region motif; that stretch reads PSPTGFLHIGG. Residues 239–243 carry the 'KMSKS' region motif; sequence KLSKR. Lys242 contacts ATP.

This sequence belongs to the class-I aminoacyl-tRNA synthetase family. Glutamate--tRNA ligase type 1 subfamily. Monomer.

The protein localises to the cytoplasm. The enzyme catalyses tRNA(Glu) + L-glutamate + ATP = L-glutamyl-tRNA(Glu) + AMP + diphosphate. Functionally, catalyzes the attachment of glutamate to tRNA(Glu) in a two-step reaction: glutamate is first activated by ATP to form Glu-AMP and then transferred to the acceptor end of tRNA(Glu). This is Glutamate--tRNA ligase 2 from Roseobacter denitrificans (strain ATCC 33942 / OCh 114) (Erythrobacter sp. (strain OCh 114)).